We begin with the raw amino-acid sequence, 171 residues long: Endoribonuclease YbeY (171 aa).

Zn(2+)-binding residues include His126, His130, and His136.

It belongs to the endoribonuclease YbeY family. Requires Zn(2+) as cofactor.

It localises to the cytoplasm. In terms of biological role, single strand-specific metallo-endoribonuclease involved in late-stage 70S ribosome quality control and in maturation of the 3' terminus of the 16S rRNA. The sequence is that of Endoribonuclease YbeY from Rhizobium johnstonii (strain DSM 114642 / LMG 32736 / 3841) (Rhizobium leguminosarum bv. viciae).